Here is a 331-residue protein sequence, read N- to C-terminus: 6-phosphogluconolactonase (331 aa).

This sequence belongs to the cycloisomerase 2 family.

The catalysed reaction is 6-phospho-D-glucono-1,5-lactone + H2O = 6-phospho-D-gluconate + H(+). The protein operates within carbohydrate degradation; pentose phosphate pathway; D-ribulose 5-phosphate from D-glucose 6-phosphate (oxidative stage): step 2/3. In terms of biological role, catalyzes the hydrolysis of 6-phosphogluconolactone to 6-phosphogluconate. In Enterobacter sp. (strain 638), this protein is 6-phosphogluconolactonase.